Reading from the N-terminus, the 440-residue chain is Serine/threonine-protein kinase toxin HipA (440 aa).

At S150 the chain carries Phosphoserine; by autocatalysis. Residues 152-157, K181, and 234-236 contribute to the ATP site; these read AGAQEK and ERF. D309 serves as the catalytic Proton acceptor. ATP is bound by residues 311–314 and 331–332; these read HAKN and YD. The DNA-binding element occupies 379-382; sequence KVLR.

It belongs to the HipA Ser/Thr kinase family. Forms a HipA(2)HipB(2) heterotetramer which can interact with a single operator on DNA. When 2 operators are present each HipB dimer contacts 1 HipA molecule, which are brought together by the DNA bend and dimerize, blocking the HipA active site and inactivating its toxic activity. Mutations present in allele hipA7 (G22S and D291A) decrease the affinity of HipA for HipB. In terms of processing, autophosphorylates intermolecularly on Ser-150; phosphorylated form not seen to bind ATP and no longer has kinase activity.

It catalyses the reaction L-seryl-[protein] + ATP = O-phospho-L-seryl-[protein] + ADP + H(+). The enzyme catalyses L-threonyl-[protein] + ATP = O-phospho-L-threonyl-[protein] + ADP + H(+). Its activity is regulated as follows. Once phosphorylated no longer has kinase activity. Functionally, toxic component of a type II toxin-antitoxin (TA) system, first identified by mutations that increase production of persister cells, a fraction of cells that are phenotypic variants not killed by antibiotics, which lead to multidrug tolerance. Persistence may be ultimately due to global remodeling of the persister cell's ribosomes. Phosphorylates Glu-tRNA-ligase (AC P04805, gltX, on 'Ser-239') in vivo. Phosphorylation of GltX prevents it from being charged, leading to an increase in uncharged tRNA(Glu). This induces amino acid starvation and the stringent response via RelA/SpoT and increased (p)ppGpp levels, which inhibits replication, transcription, translation and cell wall synthesis, reducing growth and leading to persistence and multidrug resistance. Once the level of HipA exceeds a threshold cells become dormant, and the length of dormancy is determined by how much HipA levels exceed the threshold. The hipA7 mutation (a double G22S D291A mutation) leads to increased generation of persister cells (cells that survive antibiotic treatment) probably by entering into a dormant state, as well as cold-sensitivity. Wild-type cells produce persisters at a frequency of 10(-6) to 10(-5) whereas hipA7 cells produce about 100-fold more persisters. hipA7 decreases the affinity for antitoxin HipB, leading to increased HipA levels and persistence; depending on the protein level, can be toxic enough to reduce cell growth or even kill cells. Generation of persister cells requires (p)ppGpp as cells lacking relA or relA/spoT generate fewer or no persister cells respectively compared to hipA7. The toxic effect of HipA is neutralized by its cognate antitoxin HipB. Also neutralized by overexpression of gltX. With HipB acts as a corepressor for transcription of the hipBA promoter; binding of HipA-HipB to DNA induces a 70 degree bend. This brings together and dimerizes 2 HipA molecules, which distorts the promoter region, preventing sigma-factor binding; additionally HipA and HipB would physically prevent RNA core polymerase from contacting the -35 promoter box. May play a role in biofilm formation. In Escherichia coli (strain K12), this protein is Serine/threonine-protein kinase toxin HipA (hipA).